The chain runs to 667 residues: Mediator of RNA polymerase II transcription subunit 17 (667 aa).

Positions 172–197 form a coiled coil; the sequence is KRRALQEAVQVLDMAQKQRQRASSNL.

This sequence belongs to the Mediator complex subunit 17 family. Component of the Mediator complex.

It is found in the nucleus. Functionally, component of the Mediator complex, a coactivator involved in regulated gene transcription of nearly all RNA polymerase II-dependent genes. Mediator functions as a bridge to convey information from gene-specific regulatory proteins to the basal RNA polymerase II transcription machinery. Mediator is recruited to promoters by direct interactions with regulatory proteins and serves as a scaffold for the assembly of a functional preinitiation complex with RNA polymerase II and the general transcription factors. The sequence is that of Mediator of RNA polymerase II transcription subunit 17 (mdt-17) from Caenorhabditis elegans.